A 137-amino-acid polypeptide reads, in one-letter code: Regulator of cell cycle RGCC (137 aa).

Disordered regions lie at residues 1-20 (MKPP…APAL) and 57-80 (LERM…SESA). The segment covering 65–80 (SASVSDSSGFSDSESA) has biased composition (low complexity). Ser-67, Ser-69, Ser-71, Ser-75, Ser-91, and Ser-97 each carry phosphoserine. A Phosphothreonine; by CDK1 modification is found at Thr-111.

In terms of assembly, interacts with SMAD3. Interacts with CDK1 and PLK1. Detected in brain, heart and liver (at protein level). Highly expressed in liver, skeletal muscle, kidney and pancreas. Detected at lower levels in heart, brain and placenta. Detected in aorta endothelial cells. Overexpressed in colon, breast, prostate, bladder, lung, and ovarian cancer tissues.

Its subcellular location is the cytoplasm. The protein resides in the nucleus. It localises to the cytoskeleton. It is found in the microtubule organizing center. The protein localises to the centrosome. In terms of biological role, modulates the activity of cell cycle-specific kinases. Enhances CDK1 activity. May contribute to the regulation of the cell cycle. May inhibit growth of glioma cells by promoting arrest of mitotic progression at the G2/M transition. Fibrogenic factor contributing to the pathogenesis of renal fibrosis through fibroblast activation. The polypeptide is Regulator of cell cycle RGCC (RGCC) (Homo sapiens (Human)).